We begin with the raw amino-acid sequence, 1789 residues long: Genome polyprotein (1789 aa).

The interval 1 to 25 is disordered; that stretch reads MMMASKDVVPTAASSENANNNSSIK. The interaction with host MAP1LC3A/LC3 stretch occupies residues 1–183; sequence MMMASKDVVP…MCPLPPVDQR (183 aa). Over residues 12 to 23 the composition is skewed to low complexity; it reads AASSENANNNSS. An interaction with NTPase region spans residues 184-398; that stretch reads STTPATEPTI…ASLLPDFHLQ (215 aa). The tract at residues 301–398 is interaction with NS4; that stretch reads HPTQDWSRDT…ASLLPDFHLQ (98 aa). Host ER membrane association stretches follow at residues 318–349 and 360–398; these read KLEM…KPLN and TFMG…FHLQ. The segment at 399 to 574 is interaction with NS1-2 and NS4 and homooligomerization; that stretch reads GPEDLARDLV…GKTKAAEHLA (176 aa). An SF3 helicase domain is found at 532–697; the sequence is RISMARAALA…EHTRKVSPGD (166 aa). 560 to 567 is a binding site for ATP; that stretch reads GPPGIGKT. Positions 651–756 are important for mitochondrion targeting; that stretch reads AIVITTNAPG…AVALTMERQD (106 aa). The functions as endoplasmic reticulum export signal stretch occupies residues 826 to 832; that stretch reads YIIESDG. A host membrane association region spans residues 865-910; the sequence is RAVAYASCFQSAITTILQMAGSALVINRAVKRMFGTRTAAMALEGP. Residues 958-981 are disordered; that stretch reads DAVPEGKNKGKTKKGRGRKNNYNA. The segment covering 966–976 has biased composition (basic residues); it reads KGKTKKGRGRK. Residues 989–994 are acidic; sequence DEEYEE. Tyr-992 is subject to O-(5'-phospho-RNA)-tyrosine. An interaction with host EIF4G region spans residues 1084–1100; sequence WADDDREVDYNEKINFE. One can recognise a Peptidase C37 domain in the interval 1101 to 1281; it reads APPTLWSRVT…QAGEGETALE (181 aa). Active-site for 3CLpro activity residues include His-1130, Glu-1154, and Cys-1239. Residues 1516-1637 enclose the RdRp catalytic domain; that stretch reads KNHFDADYTA…STDIDFDPAR (122 aa). Asp-1520, Asp-1522, Asp-1624, and Glu-1625 together coordinate Mg(2+).

Homodimer. Homooligomer. Interacts with NTPase; this interaction increases the proapoptotic activity of the NTPase and is crucial for the formation of the viral replication complex. Interacts with NS4; this interaction is crucial for the formation of the viral replication complex. Interacts (via N-terminus) with host VAPA. Interacts with host MAP1LC3A/LC3; this interaction does not seem to be linked to host autophagy, but rather plays a role in the formation of viral factories. In terms of assembly, homooligomer. Interacts with NS1-2; this interaction increases the proapoptotic activity of the NTPase and is crucial for the formation of the viral replication complex. Interacts with NS4; this interaction increases the proapoptotic activity of the NTPase. As to quaternary structure, homodimer. Monomer; in solution. Interacts with NTPase; this interaction increases the proapoptotic activity of the NTPase. Interacts with NS1-2; this interaction is crucial for the formation of the viral replication complex. In terms of assembly, monomer. Interacts with the RNA-directed RNA polymerase; this interaction induces the multimerization of the RdRp and enhances its activity. Interacts with host IEF4G1; this interaction plays a role in translation of viral proteins. As to quaternary structure, homohexamer; also forms fibrous hexameric oligomer. Interacts with the viral genome-linked protein; this interaction induces the multimerization of the RdRp and enhances its activity. Mg(2+) serves as cofactor. It depends on Mn(2+) as a cofactor. Specific enzymatic cleavages in vivo yield mature proteins. 3CLpro is first autocatalytically cleaved, then processes the whole polyprotein. NS1/2-3 and NS3-4 sites are cleaved rapidly and NS4-5, NS5-6, and NS6-7 sites are processed subsequently and less efficiently. Post-translationally, VPg is uridylylated by the polymerase and is covalently attached to the 5'-end of the polyadenylated genomic and subgenomic RNAs. This uridylylated form acts as a nucleotide-peptide primer for the polymerase. In terms of processing, cleaved by host CASP3/caspase 3 at 18-22 h.p.i. The cleavage allows NS1 secretion, which is essential for intestinal infection and resistance to IFN-lambda.

It is found in the host Golgi apparatus membrane. The protein localises to the secreted. Its subcellular location is the host endoplasmic reticulum membrane. It localises to the host cytoplasm. The protein resides in the host perinuclear region. It catalyses the reaction a ribonucleoside 5'-triphosphate + H2O = a ribonucleoside 5'-diphosphate + phosphate + H(+). The enzyme catalyses Endopeptidase with a preference for cleavage when the P1 position is occupied by Glu-|-Xaa and the P1' position is occupied by Gly-|-Yaa.. The catalysed reaction is RNA(n) + a ribonucleoside 5'-triphosphate = RNA(n+1) + diphosphate. With respect to regulation, inhibited by the chemical compound K36/GC376, which covalently binds to the nucleophilic cysteine residue. Inhibited by various macrocyclic inhibitors. Inhibited by the guanidine salt GuHCl. Its function is as follows. Induces the proliferation of the host smooth ER membranes forming long tubular structures. These remodeled membranes probably form the viral factories that contain the replication complex. Induces the disassembly of host Golgi. May play a role in viral replication by interacting with host VAPA, a vesicle-associated membrane protein that plays a role in SNARE-mediated vesicle fusion. This interaction may target replication complex to intracellular membranes. In terms of biological role, displays NTPase activity and RNA helix-unwinding activity. Displays RNA chaperone-like activity and destabilizes dsRNA. Induces the formation of convoluted membranes derived from the host ER. These remodeled membranes probably form the viral factories that contain the replication complex. Initiates host cell death by targeting the mitochondrial outer membrane, leading to the permeabilization of mitochondria, programmed host cell death and viral egress. Probably plays a role in preventing the assembly of host stress granules. Functionally, probable key protein responsible for the formation of membrane alterations by the virus. Induces the formation of convoluted membranes derived from the host ER. These remodeled membranes probably form the viral factories that contain the replication complex. May play a role in targeting replication complex to intracellular membranes. Induces the disassembly of host Golgi and antagonism of Golgi-dependent cellular protein secretion, probably via the mislocalization of COPII-coated vesicles. Viral genome-linked protein is covalently linked to the 5'-end of the positive-strand, negative-strand genomic RNAs and subgenomic RNA. Acts as a genome-linked replication primer. May recruit ribosome to viral RNA thereby promoting viral proteins translation. Interacts with host translation initiation complex to allow the translation of viral proteins. Induces the formation of aggregates of RNA-directed RNA polymerase in the presence of RNA. Through its interaction with the viral RNA-directed RNA polymerase, plays a crucial role in enhancing the polymerase activity. Its function is as follows. Processes the polyprotein. 3CLpro-RdRp is first released by autocleavage, then all other proteins are cleaved. May cleave host polyadenylate-binding protein thereby inhibiting cellular translation. In terms of biological role, replicates genomic and antigenomic RNA by recognizing replications specific signals. Also transcribes a subgenomic mRNA by initiating RNA synthesis internally on antigenomic RNA. This sgRNA codes for structural proteins. Catalyzes the covalent attachment VPg with viral RNAs. This is Genome polyprotein from Norovirus (strain Human/NoV/United States/Norwalk/1968/GI) (Hu/NV/NV/1968/US).